The chain runs to 119 residues: Large ribosomal subunit protein bL20 (119 aa).

Belongs to the bacterial ribosomal protein bL20 family.

Its function is as follows. Binds directly to 23S ribosomal RNA and is necessary for the in vitro assembly process of the 50S ribosomal subunit. It is not involved in the protein synthesizing functions of that subunit. The chain is Large ribosomal subunit protein bL20 from Azoarcus sp. (strain BH72).